A 230-amino-acid chain; its full sequence is PKHD-type hydroxylase XF_0598 (230 aa).

The Fe2OG dioxygenase domain occupies 78-182 (RTLPPRFNCY…RIASFFWVQS (105 aa)). His96, Asp98, and His163 together coordinate Fe cation. 2-oxoglutarate is bound at residue Arg173.

Fe(2+) is required as a cofactor. L-ascorbate serves as cofactor.

This chain is PKHD-type hydroxylase XF_0598, found in Xylella fastidiosa (strain 9a5c).